The sequence spans 130 residues: Small ribosomal subunit protein uS8 (130 aa).

The protein belongs to the universal ribosomal protein uS8 family. Part of the 30S ribosomal subunit. Contacts proteins S5 and S12.

Functionally, one of the primary rRNA binding proteins, it binds directly to 16S rRNA central domain where it helps coordinate assembly of the platform of the 30S subunit. The polypeptide is Small ribosomal subunit protein uS8 (Buchnera aphidicola subsp. Cinara cedri (strain Cc)).